Reading from the N-terminus, the 256-residue chain is Homeobox protein Hox-D13a (256 aa).

The homeobox DNA-binding region spans 191–250; the sequence is GRKKRVPYTKFQLKELEREYNTTKFITKENRRRIASSTNLSERQVTIWFQNRRVKDKKRP.

Belongs to the Abd-B homeobox family.

The protein localises to the nucleus. Functionally, sequence-specific transcription factor which is part of a developmental regulatory system that provides cells with specific positional identities on the anterior-posterior axis. This chain is Homeobox protein Hox-D13a (hoxd13a), found in Danio rerio (Zebrafish).